Reading from the N-terminus, the 88-residue chain is Small ribosomal subunit protein bS20 (88 aa).

Residues 1–12 (MANHKSALKRAK) show a composition bias toward basic residues. Positions 1–23 (MANHKSALKRAKQNTIKQMRNRS) are disordered.

The protein belongs to the bacterial ribosomal protein bS20 family.

Binds directly to 16S ribosomal RNA. The chain is Small ribosomal subunit protein bS20 from Desulfatibacillum aliphaticivorans.